The sequence spans 342 residues: Elongation factor Ts (342 aa).

The involved in Mg(2+) ion dislocation from EF-Tu stretch occupies residues 79-82 (TDFV).

It belongs to the EF-Ts family.

It is found in the cytoplasm. Associates with the EF-Tu.GDP complex and induces the exchange of GDP to GTP. It remains bound to the aminoacyl-tRNA.EF-Tu.GTP complex up to the GTP hydrolysis stage on the ribosome. In Lactococcus lactis subsp. cremoris (strain MG1363), this protein is Elongation factor Ts.